Reading from the N-terminus, the 211-residue chain is tRNA (guanine-N(7)-)-methyltransferase (211 aa).

The S-adenosyl-L-methionine site is built by Glu-43, Glu-68, Asp-95, and Asp-117. Asp-117 is a catalytic residue. Residues Lys-121, Asp-153, and Thr-190–Glu-193 contribute to the substrate site.

This sequence belongs to the class I-like SAM-binding methyltransferase superfamily. TrmB family.

It carries out the reaction guanosine(46) in tRNA + S-adenosyl-L-methionine = N(7)-methylguanosine(46) in tRNA + S-adenosyl-L-homocysteine. It functions in the pathway tRNA modification; N(7)-methylguanine-tRNA biosynthesis. Its function is as follows. Catalyzes the formation of N(7)-methylguanine at position 46 (m7G46) in tRNA. The polypeptide is tRNA (guanine-N(7)-)-methyltransferase (Staphylococcus saprophyticus subsp. saprophyticus (strain ATCC 15305 / DSM 20229 / NCIMB 8711 / NCTC 7292 / S-41)).